We begin with the raw amino-acid sequence, 943 residues long: Isoleucine--tRNA ligase (943 aa).

Residues 59 to 69 carry the 'HIGH' region motif; that stretch reads PYANGRIHLGH. Glu-577 lines the L-isoleucyl-5'-AMP pocket. The short motif at 618 to 622 is the 'KMSKS' region element; sequence KMSKS. Lys-621 contributes to the ATP binding site. Zn(2+) contacts are provided by Cys-906, Cys-909, Cys-926, and Cys-929.

It belongs to the class-I aminoacyl-tRNA synthetase family. IleS type 1 subfamily. Monomer. The cofactor is Zn(2+).

It is found in the cytoplasm. The catalysed reaction is tRNA(Ile) + L-isoleucine + ATP = L-isoleucyl-tRNA(Ile) + AMP + diphosphate. Catalyzes the attachment of isoleucine to tRNA(Ile). As IleRS can inadvertently accommodate and process structurally similar amino acids such as valine, to avoid such errors it has two additional distinct tRNA(Ile)-dependent editing activities. One activity is designated as 'pretransfer' editing and involves the hydrolysis of activated Val-AMP. The other activity is designated 'posttransfer' editing and involves deacylation of mischarged Val-tRNA(Ile). This Stenotrophomonas maltophilia (strain K279a) protein is Isoleucine--tRNA ligase.